Consider the following 145-residue polypeptide: Bacilliredoxin GK1781 (145 aa).

Belongs to the bacilliredoxin family.

The sequence is that of Bacilliredoxin GK1781 from Geobacillus kaustophilus (strain HTA426).